A 329-amino-acid polypeptide reads, in one-letter code: uncharacterized protein (329 aa).

7 helical membrane passes run 29–49 (IVLW…AISH), 78–98 (VLVA…CWMG), 120–140 (KKWL…SLLV), 164–184 (WMIG…LIYL), 217–237 (YFFL…LLVI), 260–280 (FFWT…SFIV), and 299–319 (GSSL…LLFI).

This sequence to M.pneumoniae MPN_129.

It localises to the cell membrane. This is an uncharacterized protein from Mycoplasma pneumoniae (strain ATCC 29342 / M129 / Subtype 1) (Mycoplasmoides pneumoniae).